The primary structure comprises 454 residues: MGPDAKKQKLQSEDHLQNDLPVSCFLAWCKKVGLELNPKVYISTEGTVSQYGMLAREDLSDGELLFSIPRSAILSQNTTRIRDLIEKEQDSLQSCSGWVPLLISLLYEATDSSSHWAPYFGLWPELDPPDMPMFWSEEEQTKLLQGTGILEAVHKDLKNIEKEYNSIVLPFIRRNPEKFCPMKHTLDLYKRLVAFVMAYSFQEPQEEDEEEDIEKDILPPMMVPVADLLNHVAQHNAHLEFTPECLRMITTKSVCAGQELFNTYGQMANWQLLHMYGFAEPHPQNCNETADIQMVTVREAAFQVARTEEDRLEMQKRWDFLCHIEIVGEEGAFVFGLEEVMTEEELKACLKVLCMSTDEFAEYKENDGWEEDEDNDEQTLLTQEISRLPIPWRKLLHLSAELTLKAYKTELSMDEALVNDPTAYAKLSSREQHSLQVQYGQKKILHLLLELTKS.

One can recognise an SET domain in the interval 38 to 265 (PKVYISTEGT…AGQELFNTYG (228 aa)).

Belongs to the class V-like SAM-binding methyltransferase superfamily. Histone-lysine methyltransferase family. SETD6 subfamily.

The protein localises to the nucleus. In terms of biological role, protein-lysine N-methyltransferase. The protein is N-lysine methyltransferase setd6 (setd6) of Xenopus tropicalis (Western clawed frog).